We begin with the raw amino-acid sequence, 108 residues long: LBH domain-containing protein 2 (108 aa).

Over residues 1 to 11 (MSTPRPAPPQP) the composition is skewed to pro residues. The segment at 1–108 (MSTPRPAPPQ…SEDPAAPARG (108 aa)) is disordered. One can recognise an LBH domain in the interval 37–62 (QRLPSIVVEPSEADPVESGELRWPLE). A compositionally biased stretch (low complexity) spans 63–85 (SAQRGPSQSRAAAAPSPSLPGEP).

The polypeptide is LBH domain-containing protein 2 (Homo sapiens (Human)).